The chain runs to 421 residues: UDP-N-acetylglucosamine 1-carboxyvinyltransferase (421 aa).

23–24 is a binding site for phosphoenolpyruvate; sequence KN. Position 92 (R92) interacts with UDP-N-acetyl-alpha-D-glucosamine. The active-site Proton donor is C116. C116 bears the 2-(S-cysteinyl)pyruvic acid O-phosphothioketal mark. UDP-N-acetyl-alpha-D-glucosamine-binding positions include 121 to 125, 161 to 164, D306, and I328; these read RPVDL and KVSV.

This sequence belongs to the EPSP synthase family. MurA subfamily.

It is found in the cytoplasm. It carries out the reaction phosphoenolpyruvate + UDP-N-acetyl-alpha-D-glucosamine = UDP-N-acetyl-3-O-(1-carboxyvinyl)-alpha-D-glucosamine + phosphate. It functions in the pathway cell wall biogenesis; peptidoglycan biosynthesis. Functionally, cell wall formation. Adds enolpyruvyl to UDP-N-acetylglucosamine. The polypeptide is UDP-N-acetylglucosamine 1-carboxyvinyltransferase (Vibrio vulnificus (strain CMCP6)).